A 44-amino-acid polypeptide reads, in one-letter code: Cytochrome b559 subunit beta (44 aa).

The helical transmembrane segment at 17–41 (VRWLAVHTLAVPSVFFVGAIAAMQF) threads the bilayer. Residues R18 and H23 each contribute to the heme site.

The protein belongs to the PsbE/PsbF family. In terms of assembly, heterodimer of an alpha subunit and a beta subunit. PSII is composed of 1 copy each of membrane proteins PsbA, PsbB, PsbC, PsbD, PsbE, PsbF, PsbH, PsbI, PsbJ, PsbK, PsbL, PsbM, PsbT, PsbX, PsbY, PsbZ, Psb30/Ycf12, peripheral proteins PsbO, CyanoQ (PsbQ), PsbU, PsbV and a large number of cofactors. It forms dimeric complexes. It depends on heme b as a cofactor.

It localises to the cellular thylakoid membrane. Functionally, this b-type cytochrome is tightly associated with the reaction center of photosystem II (PSII). PSII is a light-driven water:plastoquinone oxidoreductase that uses light energy to abstract electrons from H(2)O, generating O(2) and a proton gradient subsequently used for ATP formation. It consists of a core antenna complex that captures photons, and an electron transfer chain that converts photonic excitation into a charge separation. This Synechocystis sp. (strain ATCC 27184 / PCC 6803 / Kazusa) protein is Cytochrome b559 subunit beta.